A 550-amino-acid polypeptide reads, in one-letter code: Cochlin (550 aa).

Residues 1 to 15 (MPAAWMPVLRLGAYA) form the signal peptide. Residues 28–121 (VPIAITCFTR…QTLARWSASF (94 aa)) form the LCCL domain. 2 cysteine pairs are disulfide-bonded: Cys-34–Cys-50 and Cys-54–Cys-74. N-linked (GlcNAc...) asparagine glycosylation occurs at Asn-100. The span at 126–139 (GKSSTQEATGQAVS) shows a compositional bias: polar residues. The tract at residues 126–158 (GKSSTQEATGQAVSTARPPTGKRLKKTPEKKTG) is disordered. 2 consecutive VWFA domains span residues 165–350 (DIAF…VQKL) and 367–537 (NIAF…VSDI).

In terms of assembly, monomer. May form homodimer. Interacts with type II collagen. Interacts with ANXA2. Interacts with SLC44A2. N-glycosylated.

The protein resides in the secreted. It localises to the extracellular space. The protein localises to the extracellular matrix. Functionally, plays a role in the control of cell shape and motility in the trabecular meshwork. This Cavia porcellus (Guinea pig) protein is Cochlin (COCH).